Reading from the N-terminus, the 85-residue chain is Small ribosomal subunit protein uS17 (85 aa).

The protein belongs to the universal ribosomal protein uS17 family. In terms of assembly, part of the 30S ribosomal subunit.

One of the primary rRNA binding proteins, it binds specifically to the 5'-end of 16S ribosomal RNA. This chain is Small ribosomal subunit protein uS17, found in Desulforapulum autotrophicum (strain ATCC 43914 / DSM 3382 / VKM B-1955 / HRM2) (Desulfobacterium autotrophicum).